Consider the following 373-residue polypeptide: Mannitol-1-phosphate 5-dehydrogenase (373 aa).

Residue 3–14 coordinates NAD(+); sequence ALHFGAGNIGRG.

It belongs to the mannitol dehydrogenase family.

The enzyme catalyses D-mannitol 1-phosphate + NAD(+) = beta-D-fructose 6-phosphate + NADH + H(+). This Bacillus pumilus (strain SAFR-032) protein is Mannitol-1-phosphate 5-dehydrogenase.